Reading from the N-terminus, the 566-residue chain is MNPTAPQGGQLWSRCGGCASLLYRKRLRRNLDVCPECGAHSRLDASARLAQLVDPGSFTALPDRAPEVDPIGFVDVLPYPHRLTAARSGTGLVEAVVCGTATVAGHRCAIAVMDFRFLGGSLGCAVGELITRAAERALADRVPLVVVTASGGARMQEGVLSLMQMATVSQAIAALRESGVPSISVLTDPTYGGVAASFATNTDVVLAESGARMGFAGPRVIRQVTGRELPDGFQTAEFLLRHGQVDLVVPRHALRGRLAMLLAAAAGGRPPVGGGSRSEYSPGDRPSAAACRGEGQDAWETVRLARHPGRPTTLDYLETGFDGFVELHGDRLGADCPAVVGGLADLAGRPVMVVGHQKGHTTAELMARNFGMASPAGHRKALRLVRLAARWGLPVVTLVDTPGADPGVDAEEQGQAAAIAENILTLTTLPTPVVAVITGEGGSGGALALAVADRVLMLEHAVYSVISPEGCAAILWPDRSAAPQAARALRLTSADLCRLGVVDAVVPEPAPAAHHDPPAAVQAVREAVLAHLVPLLDVPTATLVRCRRRRFRRFGASRLGVRAGAR.

The interval 1–243 (MNPTAPQGGQ…QTAEFLLRHG (243 aa)) is acetyl-coenzyme A carboxylase carboxyl transferase subunit beta. The 270-residue stretch at 11–280 (LWSRCGGCAS…PVGGGSRSEY (270 aa)) folds into the CoA carboxyltransferase N-terminal domain. Residues 11–534 (LWSRCGGCAS…REAVLAHLVP (524 aa)) form a carboxyltransferase region. Residues Cys15, Cys18, Cys34, and Cys37 each contribute to the Zn(2+) site. Residues 15–37 (CGGCASLLYRKRLRRNLDVCPEC) form a C4-type zinc finger. The tract at residues 244-566 (QVDLVVPRHA…SRLGVRAGAR (323 aa)) is acetyl-coenzyme A carboxylase carboxyl transferase subunit alpha. The tract at residues 268–292 (GRPPVGGGSRSEYSPGDRPSAAACR) is disordered. Residues 282 to 534 (PGDRPSAAAC…REAVLAHLVP (253 aa)) form the CoA carboxyltransferase C-terminal domain.

The protein in the N-terminal section; belongs to the AccD/PCCB family. This sequence in the C-terminal section; belongs to the AccA family. In terms of assembly, acetyl-CoA carboxylase is a heterotetramer composed of biotin carboxyl carrier protein (AccB), biotin carboxylase (AccC) and two subunits of ACCase subunit beta/alpha. Zn(2+) serves as cofactor.

It is found in the cytoplasm. The enzyme catalyses N(6)-carboxybiotinyl-L-lysyl-[protein] + acetyl-CoA = N(6)-biotinyl-L-lysyl-[protein] + malonyl-CoA. It functions in the pathway lipid metabolism; malonyl-CoA biosynthesis; malonyl-CoA from acetyl-CoA: step 1/1. Component of the acetyl coenzyme A carboxylase (ACC) complex. Biotin carboxylase (BC) catalyzes the carboxylation of biotin on its carrier protein (BCCP) and then the CO(2) group is transferred by the transcarboxylase to acetyl-CoA to form malonyl-CoA. This is Acetyl-coenzyme A carboxylase carboxyl transferase subunits beta/alpha (accD) from Salinispora arenicola (strain CNS-205).